The primary structure comprises 179 residues: Ribulose bisphosphate carboxylase small subunit, chloroplastic 2 (179 aa).

The N-terminal 58 residues, 1-58, are a transit peptide targeting the chloroplast; it reads MASSATMLSSVATAACVAPAQASMVAPFVGLKSASAFPVTQKTVTGLSTLPSNGGRVQ.

This sequence belongs to the RuBisCO small chain family. Heterohexadecamer of 8 large and 8 small subunits.

The protein resides in the plastid. The protein localises to the chloroplast. In terms of biological role, ruBisCO catalyzes two reactions: the carboxylation of D-ribulose 1,5-bisphosphate, the primary event in carbon dioxide fixation, as well as the oxidative fragmentation of the pentose substrate. Both reactions occur simultaneously and in competition at the same active site. Although the small subunit is not catalytic it is essential for maximal activity. This Fritillaria agrestis (Stinkbells) protein is Ribulose bisphosphate carboxylase small subunit, chloroplastic 2.